Here is a 145-residue protein sequence, read N- to C-terminus: MDINEIMKILPHRFPFLMVDRIVEMEPGKRCVGLKNVTINEPFFQGHFPGHPVMPGVLIVEAMAQVAGIMAYLASDDETRKKVSYFMAIDNAKFRKPVFPGDQLRIEVETIFSRRGIWSVAGKAYVDGVLATEAELKATFAEKAK.

The active site involves H47.

It belongs to the thioester dehydratase family. FabZ subfamily.

It is found in the cytoplasm. It carries out the reaction a (3R)-hydroxyacyl-[ACP] = a (2E)-enoyl-[ACP] + H2O. Its function is as follows. Involved in unsaturated fatty acids biosynthesis. Catalyzes the dehydration of short chain beta-hydroxyacyl-ACPs and long chain saturated and unsaturated beta-hydroxyacyl-ACPs. The polypeptide is 3-hydroxyacyl-[acyl-carrier-protein] dehydratase FabZ (Geotalea uraniireducens (strain Rf4) (Geobacter uraniireducens)).